A 451-amino-acid polypeptide reads, in one-letter code: Trigger factor (451 aa).

The 82-residue stretch at 162 to 243 (GDYAIIDITT…VQQSKERKLP (82 aa)) folds into the PPIase FKBP-type domain.

The protein belongs to the FKBP-type PPIase family. Tig subfamily.

It is found in the cytoplasm. It catalyses the reaction [protein]-peptidylproline (omega=180) = [protein]-peptidylproline (omega=0). Involved in protein export. Acts as a chaperone by maintaining the newly synthesized protein in an open conformation. Functions as a peptidyl-prolyl cis-trans isomerase. The chain is Trigger factor from Corynebacterium aurimucosum (strain ATCC 700975 / DSM 44827 / CIP 107346 / CN-1) (Corynebacterium nigricans).